The following is a 326-amino-acid chain: ELAV-like protein 1 (326 aa).

3 consecutive RRM domains span residues 20-98 (TNLI…VARP), 106-186 (ANLY…FAAN), and 244-322 (WCIF…FKTS).

Belongs to the RRM elav family. In terms of assembly, interacts (via RRM3) with cirbp. Unable to form oligomers. Part of a ribonucleoprotein (RNP) complex, at least composed of elavl1/elrA and/or elavl2/elrB, igf2bp3/vg1RBP, ddx6/Xp54, ybx2/frgy2, lsm14b/rap55b and, in a subset of RNP complexes, stau1/staufen.

The protein localises to the cytoplasm. Its subcellular location is the cell cortex. Functionally, RNA-binding protein that binds to the 3'-UTR region of mRNAs and increases their stability. Involved in embryonic stem cells (ESCs) differentiation: preferentially binds mRNAs that are not methylated by N6-methyladenosine (m6A), stabilizing them, promoting ESCs differentiation. Binds to poly-U elements and AU-rich elements (AREs) in the 3'-UTR of target mRNAs. Acts cooperatively with cribp to stabilize AU-rich sequence (ARE)-containing mRNAs. May play a role during gastrulation. Required for the vegetal localization of vg1 mRNA. The chain is ELAV-like protein 1 from Xenopus tropicalis (Western clawed frog).